Consider the following 522-residue polypeptide: MSHPSTVTSEPSNLLDFVPKLGNFVLNSSLHGNNSNGYSSFSSNSVHFGGLATQNRYKFVNSLSFSKEGSNLKRILSDFNRVIRLHCDRIPLGFSSIGLNSGESNGVSDNGHGVLEDVRVPVNAVEPESPKRVLILMSDTGGGHRASAEAIKAAFNEEFGDDYQVFVTDLWSEHTPWPFNQLPRSYNFLVKHGPLWKMMYYGTSPRVIHQSNFAATSVFIAREVARGLMKYQPDIIISVHPLMQHVPLRILRGRGLLEKIVFTTVVTDLSTCHPTWFHKLVTRCYCPSNEVAKRATKAGLQPSQIKVYGLPVRPSFVRSVRPKNELRKELGMDEHLPAVLLMGGGEGMGPIEATARALGNALYDANLGEPTGQLLVICGRNKKLAGKLSSIDWKIPVQVKGFVTKIEECMGACDCIITKAGPGTIAEAMIRGLPIILNDYIAGQEAGNVPYVIENGIGKYLKSPKEIAKTVSQWFGPKANELQIMSQNALKHARPDAVFKIVHDLDELVRQKIFVRQYSCAA.

Residues 1 to 98 (MSHPSTVTSE…RIPLGFSSIG (98 aa)) constitute a chloroplast transit peptide.

This sequence belongs to the glycosyltransferase 28 family. As to quaternary structure, homodimer. Zn(2+) serves as cofactor.

It is found in the plastid. The protein resides in the chloroplast inner membrane. The catalysed reaction is a 1,2-diacyl-sn-glycerol + UDP-alpha-D-galactose = a 1,2-diacyl-3-O-(beta-D-galactosyl)-sn-glycerol + UDP + H(+). Its activity is regulated as follows. Inhibited by ortho-phenanthroline and UDP (competitive inhibitor relatively to UDP-Gal only) and inactivated by citraconic anhydride, tert-butoxycarbonyl-L-methionine hydrosuccinimidyl ester (SLR) and N-ethylmaleimide (NEM). Functionally, involved in the synthesis of the major structural component of photosynthetic membranes. The 1,2-diacylglycerol substrate preference is 18:2/18:2 &gt; 18:0/18:1 &gt; 18:1/18:1 &gt; 18:1/16:0 &gt; 16:0/18:2 &gt; 18:3/18:3 &gt; 16:0/18:1 &gt; 16:0/16:0 &gt; 18:0/18:0. This is Monogalactosyldiacylglycerol synthase, chloroplastic (MGD A) from Spinacia oleracea (Spinach).